We begin with the raw amino-acid sequence, 260 residues long: Major prion protein (260 aa).

An N-terminal signal peptide occupies residues 1 to 22 (MANLGCWMLVLFVATWSDLGLC). Residues 23–237 (KKRPKPGGWN…ESQAYYQRGS (215 aa)) are interaction with GRB2, ERI3 and SYN1. Positions 26–112 (PKPGGWNTGG…HNQWNKPSKP (87 aa)) are disordered. A run of 6 repeats spans residues 51–58 (PQGGGWGQ), 59–66 (PHGGGWGQ), 67–74 (PHGGGWGQ), 75–82 (PHGGGWGQ), 83–90 (PHGGGWGQ), and 91–98 (PHGGGWGQ). Positions 51-98 (PQGGGWGQPHGGGWGQPHGGGWGQPHGGGWGQPHGGGWGQPHGGGWGQ) are 6 X 8 AA tandem repeats of P-H-G-G-G-W-G-Q. The segment covering 52 to 102 (QGGGWGQPHGGGWGQPHGGGWGQPHGGGWGQPHGGGWGQPHGGGWGQGGGT) has biased composition (gly residues). The Cu(2+) site is built by His-68, Gly-69, Gly-70, His-76, Gly-77, Gly-78, His-84, Gly-85, Gly-86, His-92, Gly-93, and Gly-94. Cys-186 and Cys-221 form a disulfide bridge. N-linked (GlcNAc...) asparagine glycosylation is found at Asn-188 and Asn-204. Ser-237 carries the GPI-anchor amidated serine lipid modification. The propeptide at 238–260 (SMVLFSSPPVILLISFLIFLIVG) is removed in mature form.

This sequence belongs to the prion family. As to quaternary structure, monomer and homodimer. Has a tendency to aggregate into amyloid fibrils containing a cross-beta spine, formed by a steric zipper of superposed beta-strands. Soluble oligomers may represent an intermediate stage on the path to fibril formation. Copper binding may promote oligomerization. Interacts with GRB2, APP, ERI3/PRNPIP and SYN1. Mislocalized cytosolically exposed PrP interacts with MGRN1; this interaction alters MGRN1 subcellular location and causes lysosomal enlargement. Interacts with KIAA1191.

The protein resides in the cell membrane. The protein localises to the golgi apparatus. In terms of biological role, its primary physiological function is unclear. Has cytoprotective activity against internal or environmental stresses. May play a role in neuronal development and synaptic plasticity. May be required for neuronal myelin sheath maintenance. May play a role in iron uptake and iron homeostasis. Soluble oligomers are toxic to cultured neuroblastoma cells and induce apoptosis (in vitro). Association with GPC1 (via its heparan sulfate chains) targets PRNP to lipid rafts. Also provides Cu(2+) or Zn(2+) for the ascorbate-mediated GPC1 deaminase degradation of its heparan sulfate side chains. The sequence is that of Major prion protein (PRNP) from Saimiri sciureus (Common squirrel monkey).